The sequence spans 124 residues: Putative membrane protein insertion efficiency factor (124 aa).

This sequence belongs to the UPF0161 family.

The protein localises to the cell inner membrane. Its function is as follows. Could be involved in insertion of integral membrane proteins into the membrane. This Psychrobacter arcticus (strain DSM 17307 / VKM B-2377 / 273-4) protein is Putative membrane protein insertion efficiency factor.